The chain runs to 1287 residues: Pullulanase A (1287 aa).

The N-terminal stretch at 1-44 is a signal peptide; the sequence is MRKTPSHTEKKMVYSIRSLKNGTGSVLIGASLVLLAMATPTISS. Residues 42–139 form a disordered region; sequence ISSDESTPTT…VTTETKAEEP (98 aa). Low complexity predominate over residues 48–61; sequence TPTTNEPNNRNTTT. Polar residues predominate over residues 79–90; it reads DISSPGNANASL. 2 stretches are compositionally biased toward low complexity: residues 99 to 113 and 122 to 133; these read TEPT…DPAP and EPTTSTSPVTTE. Residues 163-165, Trp175, Asp221, 270-272, Trp283, Lys325, and Asn330 each bind substrate; these read WTW and WYW. Ca(2+) contacts are provided by Ser668 and Tyr670. Substrate contacts are provided by residues 674 to 675 and Phe750; that span reads YD. Asp785 serves as the catalytic Nucleophile. Glu814 acts as the Proton donor in catalysis. Trp816 contacts substrate. Residues Met835, Thr838, and Asp839 each coordinate Ca(2+). Residues Asp846, Arg849, and Tyr856 each contribute to the substrate site. 2 residues coordinate Ca(2+): Asp889 and Asp893. Substrate is bound by residues Asn903, Lys976, and 996–998; that span reads DSY. Asp999 is a Ca(2+) binding site. Residues 1147 to 1255 form a disordered region; the sequence is VSQNGTSHES…TPDRQAELPN (109 aa). Residues 1156-1203 show a composition bias toward basic and acidic residues; it reads STAEEKPDSTPSKPEHQNEASHPAHQDPAPEARPDSTKPDAKVADAEN. A compositionally biased stretch (low complexity) spans 1212–1225; it reads SQAEQPAQEAQASS. Residues 1228 to 1239 are compositionally biased toward basic and acidic residues; it reads EAVRKESVENSS. An LPXTG sorting signal motif is present at residues 1253–1257; it reads LPNTG. Pentaglycyl murein peptidoglycan amidated threonine is present on Thr1256. A propeptide spans 1257 to 1287 (removed by sortase); sequence GIKNENKLLFAGISLLALLGLGFLLKNKKEN.

This sequence belongs to the glycosyl hydrolase 13 family.

The protein localises to the secreted. Its subcellular location is the cell wall. It localises to the cell surface. The enzyme catalyses Hydrolysis of (1-&gt;6)-alpha-D-glucosidic linkages in pullulan, amylopectin and glycogen, and in the alpha- and beta-limit dextrins of amylopectin and glycogen.. Its activity is regulated as follows. Inhibited by 4-O-alpha-D-glucopyranosylmoranoline (G1M). Its function is as follows. Virulence factor. Involved in the degradation of glycogen of the mammalian host cells. Hydrolyzes the alpha-1,6-branchpoints of glycogen. Hydrolyzes pullulan. Does not hydrolyze dextran. Binds to mouse lung alveolar type II cells that are rich in glycogen stores. Is an alpha-glucan-specific carbohydrate-binding protein, which binds to amylose (pure alpha-(1,4)-linked glucose), amylopectin (alpha-(1,4)-linked glucose with alpha-(1,6) branch points), pullulan (linear polymer of mixed alpha-(1,4)- and alpha-(1,6)-linked glucose) and glycogen (similar to amylopectin with more frequent alpha-(1,6) branch points) in vitro. Does not bind to dextran (a linear polymer of alpha-(1,6)-linked glucose). The sequence is that of Pullulanase A from Streptococcus pneumoniae.